The primary structure comprises 353 residues: uncharacterized protein (353 aa).

5 residues coordinate Mn(2+): Asp-212, Asp-223, His-287, Glu-316, and Glu-330.

This sequence belongs to the peptidase M24B family. The cofactor is Mn(2+).

This is an uncharacterized protein from Bacillus subtilis (strain 168).